Here is a 394-residue protein sequence, read N- to C-terminus: MPAPLFLSGPCEICGQKTSGRHFGVLSCRSCAAFFRRSATWSRKKVQCVKGTCKIFEDGKFNCKQCRLKKCVEVGMDSKKFQTNRDLISSCSVPQSLCNFLGRPEFILCCEPDKASVFKTTIDVTYLVDMAKNLLEKDPCQCPLSNSLEQLSTTLENMRGMKLNKETQIIKKLGKNESLKTWEQGFLRAVEWFSNFSEFRELDENLKMEILKTCWVSWIRLDKLSETANKRVNATLDNSLLMVGNDSCMHMNDYEVDLSWCTNYSLEQLAFFFLTPDDEKNYRQLIQDMVDLNPSSTEISYMLLQLSLEHAGKRLQGDILEATESLVQAQANQLHDYYAKKLKLSNYSSRLTQLMKITRTLEADMRLRIEKKKVADVFNIFKIQFSHPEMFETT.

The segment at residues 8–83 is a DNA-binding region (nuclear receptor); it reads SGPCEICGQK…VGMDSKKFQT (76 aa). The segment at 11–31 adopts an NR C4-type zinc-finger fold; sequence CEICGQKTSGRHFGVLSCRSC. An NR C4-type; degenerate zinc finger spans residues 47–66; the sequence is QCVKGTCKIFEDGKFNCKQC. The NR LBD domain occupies 126–394; that stretch reads YLVDMAKNLL…FSHPEMFETT (269 aa).

This sequence belongs to the nuclear hormone receptor family.

It localises to the nucleus. Its function is as follows. Orphan nuclear receptor. The chain is Nuclear hormone receptor family member nhr-103 (nhr-103) from Caenorhabditis elegans.